Reading from the N-terminus, the 254-residue chain is Phosphoglycerate mutase 1 (254 aa).

Substrate contacts are provided by residues 10–17 and 23–24; these read RHGESAWN and SG. H11 functions as the Tele-phosphohistidine intermediate in the catalytic mechanism. S14 and S23 each carry phosphoserine. Y26 bears the Phosphotyrosine mark. Position 31 is a phosphoserine (S31). Residues R62, 89–92, and K100 each bind substrate; that span reads ERHY. E89 (proton donor/acceptor) is an active-site residue. At K106 the chain carries N6-acetyllysine. 116 to 117 is a binding site for substrate; sequence RR. At S118 the chain carries Phosphoserine. A substrate-binding site is contributed by 187–188; the sequence is GN. K251 bears the N6-acetyllysine; alternate mark. K251 is subject to N6-succinyllysine; alternate. N6-acetyllysine occurs at positions 253 and 254.

This sequence belongs to the phosphoglycerate mutase family. BPG-dependent PGAM subfamily. In terms of assembly, homodimer. Post-translationally, acetylated at Lys-253, Lys-253 and Lys-254 under high glucose condition. Acetylation increases catalytic activity. Under glucose restriction SIRT1 levels dramatically increase and it deacetylates the enzyme. As to expression, expressed in the liver and brain. Not found in the muscle.

The catalysed reaction is (2R)-2-phosphoglycerate = (2R)-3-phosphoglycerate. It catalyses the reaction (2R)-3-phospho-glyceroyl phosphate = (2R)-2,3-bisphosphoglycerate + H(+). Catalyzes the interconversion of 2-phosphoglycerate and 3-phosphoglyceratea crucial step in glycolysis, by using 2,3-bisphosphoglycerate. Also catalyzes the interconversion of (2R)-2,3-bisphosphoglycerate and (2R)-3-phospho-glyceroyl phosphate. The polypeptide is Phosphoglycerate mutase 1 (Homo sapiens (Human)).